Here is a 429-residue protein sequence, read N- to C-terminus: Glutamate-1-semialdehyde 2,1-aminomutase 2 (429 aa).

At Lys268 the chain carries N6-(pyridoxal phosphate)lysine.

Belongs to the class-III pyridoxal-phosphate-dependent aminotransferase family. HemL subfamily. As to quaternary structure, homodimer. Pyridoxal 5'-phosphate is required as a cofactor.

It localises to the cytoplasm. It catalyses the reaction (S)-4-amino-5-oxopentanoate = 5-aminolevulinate. It functions in the pathway porphyrin-containing compound metabolism; protoporphyrin-IX biosynthesis; 5-aminolevulinate from L-glutamyl-tRNA(Glu): step 2/2. This is Glutamate-1-semialdehyde 2,1-aminomutase 2 from Halalkalibacterium halodurans (strain ATCC BAA-125 / DSM 18197 / FERM 7344 / JCM 9153 / C-125) (Bacillus halodurans).